A 182-amino-acid chain; its full sequence is Adenine phosphoribosyltransferase (182 aa).

Belongs to the purine/pyrimidine phosphoribosyltransferase family. Homodimer.

It localises to the cytoplasm. It carries out the reaction AMP + diphosphate = 5-phospho-alpha-D-ribose 1-diphosphate + adenine. It participates in purine metabolism; AMP biosynthesis via salvage pathway; AMP from adenine: step 1/1. Functionally, catalyzes a salvage reaction resulting in the formation of AMP, that is energically less costly than de novo synthesis. The sequence is that of Adenine phosphoribosyltransferase from Campylobacter jejuni subsp. doylei (strain ATCC BAA-1458 / RM4099 / 269.97).